Consider the following 347-residue polypeptide: Eukaryotic translation initiation factor 3 subunit I (347 aa).

WD repeat units follow at residues 8-49 (GHER…GTLD), 51-89 (HMGS…CVQT), 149-190 (THEG…KLVE), 194-233 (VHKD…VLKT), and 291-330 (GHFG…FDFK).

Belongs to the eIF-3 subunit I family. As to quaternary structure, component of the eukaryotic translation initiation factor 3 (eIF-3) complex.

Its subcellular location is the cytoplasm. Its function is as follows. Component of the eukaryotic translation initiation factor 3 (eIF-3) complex, which is involved in protein synthesis of a specialized repertoire of mRNAs and, together with other initiation factors, stimulates binding of mRNA and methionyl-tRNAi to the 40S ribosome. The eIF-3 complex specifically targets and initiates translation of a subset of mRNAs involved in cell proliferation. This is Eukaryotic translation initiation factor 3 subunit I from Candida glabrata (strain ATCC 2001 / BCRC 20586 / JCM 3761 / NBRC 0622 / NRRL Y-65 / CBS 138) (Yeast).